Here is a 360-residue protein sequence, read N- to C-terminus: Peptide chain release factor 1 (360 aa).

Q236 is subject to N5-methylglutamine. The disordered stretch occupies residues 288–308; the sequence is QDEQDAERKSTIGTGDRSERI. The span at 293–308 shows a compositional bias: basic and acidic residues; that stretch reads AERKSTIGTGDRSERI.

Belongs to the prokaryotic/mitochondrial release factor family. Post-translationally, methylated by PrmC. Methylation increases the termination efficiency of RF1.

The protein localises to the cytoplasm. Its function is as follows. Peptide chain release factor 1 directs the termination of translation in response to the peptide chain termination codons UAG and UAA. The chain is Peptide chain release factor 1 from Streptococcus equi subsp. equi (strain 4047).